A 377-amino-acid polypeptide reads, in one-letter code: uncharacterized protein (377 aa).

2 consecutive transmembrane segments (helical) span residues 71–91 and 140–160; these read IIAT…LVGS and AEAA…PTLF.

The protein localises to the membrane. This is an uncharacterized protein from Coxiella burnetii (strain RSA 493 / Nine Mile phase I).